The primary structure comprises 358 residues: Endoplasmic reticulum junction formation protein lunapark-B (358 aa).

Over 1–45 (MGAIISRWKTKLTTVEQLENIDKEIKQLEEFRAKNQRLQKLWVGR) the chain is Cytoplasmic. A coiled-coil region spans residues 9–41 (KTKLTTVEQLENIDKEIKQLEEFRAKNQRLQKL). The chain crosses the membrane as a helical span at residues 46-66 (LLLYSSALYLLISLFVYLLYL). The Lumenal portion of the chain corresponds to 67–69 (PEQ). Residues 70–90 (WLLRLAMALPFFIYPVLVWFI) traverse the membrane as a helical segment. The Cytoplasmic portion of the chain corresponds to 91 to 358 (RRFLIFLFSK…SRGMDKHGRA (268 aa)). Residues 99 to 128 (SKRSERNNDKLEDLKATKKKILEEVMETET) are a coiled coil. The C4-type; plays a role in ER morphology zinc-finger motif lies at 275–300 (CQQCFSHNGMALKEEFEYLAFRCAYC). A disordered region spans residues 320-358 (NFEKRLRAESSTPGPAPHSATDTEESAPPSRGMDKHGRA).

It belongs to the lunapark family. Homodimer; homodimerization requires the C4-type zinc finger motif and decreases during mitosis in a phosphorylation-dependent manner. Phosphorylated. Phosphorylation occurs during interphase. Phosphorylation also occurs during mitosis; these phosphorylations reduce both its homodimerization and the ER three-way tubular junction formation.

Its subcellular location is the endoplasmic reticulum membrane. Functionally, endoplasmic reticulum (ER)-shaping membrane protein that plays a role in determining ER morphology. Involved in the stabilization of nascent three-way ER tubular junctions within the ER network. May also play a role as a curvature-stabilizing protein within three-way ER tubular junction network. The protein is Endoplasmic reticulum junction formation protein lunapark-B (lnpkb) of Takifugu rubripes (Japanese pufferfish).